Consider the following 1462-residue polypeptide: MASEAGGIGGGGGGGKIRTRRCHQGPVKPYQQGRPQHQGILSRVTESVKNIVPGWLQRYFNKSENACSCSPDADEVPPWPENREDEHAIYADENTNTDDGRITPDPAGSNTEEPSTTSTASNYPDVLTRPSLHRSHLNFSVLESPALHCQPSTSSAFPIGSSGFSLVKEIKDSTSQHDDDNISTTSGFSSRASEKDIAVSKNTSLPPLWSPEAERSHSLSQHTAISSKKPAFNLSAFGTLSTSLGNSSILKTSQLGDSPFYPGKTTYGGAAAAVRQNKVRSTPYQAPVRRQMKAKQLNAQSYGVTSSTARRILQSLEKMSSPLADAKRIPSAVSSPLNSPLDRSGIDNTVFQAKKEKVDSQYPPVQRLMTPKPVSIATNRTVYFKPSLTPSGDLRKTNQRIDKKNSTVDEKSISRQNREQESGFSYPNFSIPAANGLSSGVGGGGGKMRRERTHFVAPKPPENEEVEAPLLPQISLPISSSSLPTFSFSSPVTSASPSPVSSSQPLPNKVQMTSLGSTGSPVFTFSSPIVKSTQAAVLPPASIGFTFSVPLAKTEFSGSNSSSETVLSSSAQDITAVNSSSYKKRSAPCEDPFTPAKILREGSVLDILKTPGFASPKVDSPALQPTTTSSIVYTRPAISTFSSSGIEYGESLKAGSSWQCDTCLLQNKVTDNKCIACQAAKLPLKETAKQTGTGTPSKSDKPASTSGTGFGDKFKPAIGTWDCDTCLVQNKPEAVKCVACETPKPGTGVKRALTLTVASESPVTASSSTTVTTGTLGFGDKFKRPVGSWECPVCCVCNKAEDNRCVSCTSEKPGLVSASSSSPAPVSLSSGGCLGLDKFKKPEGSWDCEVCLVQNKADSAKCIACESAKPGTKSEFKGFGTSSSLNPAPSAFKFGIPSSSSGLSQTLTSTGNFKFGDQGGFKLGTSSDSGSTNTMNTNFKFSKPTGDFKFGVLSDSKPEEVKNDNKNDNFQFGSSSGLTNPASSAPFQFGVSTLGQQEKKEELPKSSPAGFSFGAGVNNPPNAAIDTTATSENKSGFNFGTLDTKSVSVTPFTYKTTEAKKEDAPATKGGFTFGKVGSSSLPSSSMFVLGRTEEKQQEPVTSTSLVFGKKADSEEPKCQPVFSFGNSEQTKDESSKPTFSFSVAKPSGKESEQLAKATFAFGNQTNTTTDQGAAKPVFSFLNSSSSSSSAPATSSSGGIFGSSTSSSNPPVAAFVFGQASNPVSSSAFGNAAESSTSQSLLFPQESEPATTSSTAPAASPFVFGTGASSNSVSSGFTFGATTTSSSSGSSFVFGTGHSAPSASPAFGANQTPTFGQSQGASQPNPPSFGSISSSTALFSAGSQPVPPPIFGTVSSSSQPPVFGQQPSQSAFGSGTANASSVFQFGSSTTNFNFTNNNPSGVFTFGASPSTPAASAQPSGSGVFSFSQSPASFTVGSNGKNMFSSSGTSVSGRKIKTAVRRKK.

Repeat unit 1 spans residues 237–238 (FG). A 29 X 2 AA repeats of F-G region spans residues 237-1405 (FGTLSTSLGN…NNPSGVFTFG (1169 aa)). Residue lysine 354 forms a Glycyl lysine isopeptide (Lys-Gly) (interchain with G-Cter in SUMO2) linkage. The stretch at 648-649 (YG) is repeat 2. The RanBP2-type 1 zinc-finger motif lies at 653-683 (KAGSSWQCDTCLLQNKVTDNKCIACQAAKLP). Cysteine 660, cysteine 663, cysteine 674, and cysteine 677 together coordinate Zn(2+). Repeat unit 3 spans residues 710–711 (FG). The RanBP2-type 2 zinc-finger motif lies at 717–746 (AIGTWDCDTCLVQNKPEAVKCVACETPKPG). Positions 723, 726, 737, and 740 each coordinate Zn(2+). Residues 778-779 (FG) form repeat 4. 2 consecutive RanBP2-type zinc fingers follow at residues 785 to 814 (PVGS…EKPG) and 842 to 871 (PEGS…AKPG). Zn(2+)-binding residues include cysteine 791, cysteine 794, cysteine 805, cysteine 808, cysteine 848, cysteine 851, cysteine 862, and cysteine 865. A run of 25 repeats spans residues 894–895 (FG), 915–916 (FG), 950–951 (FG), 972–973 (FG), 989–990 (FG), 1013–1014 (FG), 1073–1074 (FG), 1107–1108 (FG), 1124–1125 (FG), 1161–1162 (FG), 1200–1201 (FG), 1216–1217 (FG), 1228–1229 (FG), 1263–1264 (FG), 1276–1277 (FT), 1278–1279 (FG), 1293–1294 (FG), 1306–1307 (FG), 1314–1315 (FG), 1328–1329 (FG), 1350–1351 (FG), 1362–1363 (FG), 1371–1372 (FG), 1384–1385 (FG), and 1404–1405 (FG).

The protein belongs to the NUP153 family. In terms of assembly, part of the nuclear pore complex (NPC). Interacts with TPR (via coiled coil region); the interaction is direct and provides a link between the core structure and the TPR-containing nuclear basket of the nuclear pore complex (NPC). Interacts with HIKESHI. Interacts with SENP2. Interacts with XPO5. Interacts with RAN; the interaction occurs in a GTP- and GDP-independent manner. Interacts with MCM3AP; this interaction is required for MCM3AP localization at the nuclear pore complex. Interacts with MAPK1. Zn(2+) is required as a cofactor.

It is found in the nucleus. Its subcellular location is the nucleus membrane. The protein localises to the nuclear pore complex. It localises to the nucleoplasm. In terms of biological role, component of the nuclear pore complex (NPC), a complex required for the trafficking across the nuclear envelope. Functions as a scaffolding element in the nuclear phase of the NPC essential for normal nucleocytoplasmic transport of proteins and mRNAs. Involved in the quality control and retention of unspliced mRNAs in the nucleus; in association with TPR, regulates the nuclear export of unspliced mRNA species bearing constitutive transport element (CTE) in a NXF1- and KHDRBS1-independent manner. Mediates TPR anchoring to the nuclear membrane at NPC. The repeat-containing domain may be involved in anchoring other components of the NPC to the pore membrane. Possible DNA-binding subunit of the nuclear pore complex (NPC). In Mus musculus (Mouse), this protein is Nuclear pore complex protein Nup153 (Nup153).